The chain runs to 207 residues: Large ribosomal subunit protein bL25 (207 aa).

The interval 171–207 (EEETVVTVSAPRAEEEPTTTEAPEPEAVHGNDEEPVE) is disordered. The span at 196–207 (EAVHGNDEEPVE) shows a compositional bias: basic and acidic residues.

The protein belongs to the bacterial ribosomal protein bL25 family. CTC subfamily. Part of the 50S ribosomal subunit; part of the 5S rRNA/L5/L18/L25 subcomplex. Contacts the 5S rRNA. Binds to the 5S rRNA independently of L5 and L18.

In terms of biological role, this is one of the proteins that binds to the 5S RNA in the ribosome where it forms part of the central protuberance. The protein is Large ribosomal subunit protein bL25 of Listeria innocua serovar 6a (strain ATCC BAA-680 / CLIP 11262).